Reading from the N-terminus, the 249-residue chain is MSEKKTTHFGFQQVPVEEKAQRVAEVFHSVAAKYDLMNDLMSGGIHRLWKRFTIEASGVRTGHKVLDIAGGTGDLSYQFARLVGSSGQVILADINASMLGVGRDRLIDRGIAGNIAFTQCDAQYLPFPDNTFDCITIAFGLRNVTDKDLALRAMQRVLKPGGRLLVLEFSKPHNELLSKAYDTYSFRILPFMGKLVTNDADSYRYLAESIRMHPDQQTLKGMMDDAGFVNTEFHNMTGGIVALHKGIKP.

S-adenosyl-L-methionine is bound by residues Thr-72, Asp-93, and 121 to 122 (DA).

The protein belongs to the class I-like SAM-binding methyltransferase superfamily. MenG/UbiE family.

The enzyme catalyses a 2-demethylmenaquinol + S-adenosyl-L-methionine = a menaquinol + S-adenosyl-L-homocysteine + H(+). It carries out the reaction a 2-methoxy-6-(all-trans-polyprenyl)benzene-1,4-diol + S-adenosyl-L-methionine = a 5-methoxy-2-methyl-3-(all-trans-polyprenyl)benzene-1,4-diol + S-adenosyl-L-homocysteine + H(+). The protein operates within quinol/quinone metabolism; menaquinone biosynthesis; menaquinol from 1,4-dihydroxy-2-naphthoate: step 2/2. It functions in the pathway cofactor biosynthesis; ubiquinone biosynthesis. In terms of biological role, methyltransferase required for the conversion of demethylmenaquinol (DMKH2) to menaquinol (MKH2) and the conversion of 2-polyprenyl-6-methoxy-1,4-benzoquinol (DDMQH2) to 2-polyprenyl-3-methyl-6-methoxy-1,4-benzoquinol (DMQH2). This chain is Ubiquinone/menaquinone biosynthesis C-methyltransferase UbiE, found in Cellvibrio japonicus (strain Ueda107) (Pseudomonas fluorescens subsp. cellulosa).